A 223-amino-acid polypeptide reads, in one-letter code: Dephospho-CoA kinase (223 aa).

In terms of domain architecture, DPCK spans 3-204 (VFGLSGGAGS…AGRHRFRVAR (202 aa)). 11–16 (GSGKST) contacts ATP.

Belongs to the CoaE family.

It localises to the cytoplasm. It carries out the reaction 3'-dephospho-CoA + ATP = ADP + CoA + H(+). It participates in cofactor biosynthesis; coenzyme A biosynthesis; CoA from (R)-pantothenate: step 5/5. In terms of biological role, catalyzes the phosphorylation of the 3'-hydroxyl group of dephosphocoenzyme A to form coenzyme A. This chain is Dephospho-CoA kinase, found in Anaplasma marginale (strain St. Maries).